A 302-amino-acid chain; its full sequence is Light-independent protochlorophyllide reductase iron-sulfur ATP-binding protein (302 aa).

Residues 1-10 (MSTATISPSQ) are compositionally biased toward polar residues. The interval 1 to 21 (MSTATISPSQIGRGARPDGEG) is disordered. Residues 46-51 (GIGKST) and K75 each bind ATP. Residue S50 participates in Mg(2+) binding. Residues C131 and C165 each contribute to the [4Fe-4S] cluster site. Residues 216–217 (NR) and 240–242 (PAL) each bind ATP.

The protein belongs to the NifH/BchL/ChlL family. In terms of assembly, homodimer. Protochlorophyllide reductase is composed of three subunits; BchL, BchN and BchB. Requires [4Fe-4S] cluster as cofactor.

It carries out the reaction chlorophyllide a + oxidized 2[4Fe-4S]-[ferredoxin] + 2 ADP + 2 phosphate = protochlorophyllide a + reduced 2[4Fe-4S]-[ferredoxin] + 2 ATP + 2 H2O. It functions in the pathway porphyrin-containing compound metabolism; bacteriochlorophyll biosynthesis (light-independent). Its function is as follows. Component of the dark-operative protochlorophyllide reductase (DPOR) that uses Mg-ATP and reduced ferredoxin to reduce ring D of protochlorophyllide (Pchlide) to form chlorophyllide a (Chlide). This reaction is light-independent. The L component serves as a unique electron donor to the NB-component of the complex, and binds Mg-ATP. The sequence is that of Light-independent protochlorophyllide reductase iron-sulfur ATP-binding protein from Rubrivivax gelatinosus (strain NBRC 100245 / IL144).